The chain runs to 411 residues: Serine hydroxymethyltransferase (411 aa).

Residue 120-122 coordinates (6S)-5,6,7,8-tetrahydrofolate; that stretch reads GHL. Lys-225 carries the N6-(pyridoxal phosphate)lysine modification. (6S)-5,6,7,8-tetrahydrofolate is bound at residue 350 to 352; that stretch reads SPF.

It belongs to the SHMT family. As to quaternary structure, homodimer. Requires pyridoxal 5'-phosphate as cofactor.

It is found in the cytoplasm. The catalysed reaction is (6R)-5,10-methylene-5,6,7,8-tetrahydrofolate + glycine + H2O = (6S)-5,6,7,8-tetrahydrofolate + L-serine. It functions in the pathway one-carbon metabolism; tetrahydrofolate interconversion. The protein operates within amino-acid biosynthesis; glycine biosynthesis; glycine from L-serine: step 1/1. In terms of biological role, catalyzes the reversible interconversion of serine and glycine with tetrahydrofolate (THF) serving as the one-carbon carrier. This reaction serves as the major source of one-carbon groups required for the biosynthesis of purines, thymidylate, methionine, and other important biomolecules. Also exhibits THF-independent aldolase activity toward beta-hydroxyamino acids, producing glycine and aldehydes, via a retro-aldol mechanism. In Lactobacillus acidophilus (strain ATCC 700396 / NCK56 / N2 / NCFM), this protein is Serine hydroxymethyltransferase.